A 182-amino-acid polypeptide reads, in one-letter code: Flagellar transcriptional regulator FlhC (182 aa).

Zn(2+) is bound by residues Cys138, Cys141, Cys158, and Cys161.

It belongs to the FlhC family. Heterohexamer composed of two FlhC and four FlhD subunits. Each FlhC binds a FlhD dimer, forming a heterotrimer, and a hexamer assembles by dimerization of two heterotrimers. Zn(2+) serves as cofactor.

It localises to the cytoplasm. In terms of biological role, functions in complex with FlhD as a master transcriptional regulator that regulates transcription of several flagellar and non-flagellar operons by binding to their promoter region. Activates expression of class 2 flagellar genes, including fliA, which is a flagellum-specific sigma factor that turns on the class 3 genes. Also regulates genes whose products function in a variety of physiological pathways. The sequence is that of Flagellar transcriptional regulator FlhC from Gallionella capsiferriformans (strain ES-2) (Gallionella ferruginea capsiferriformans (strain ES-2)).